An 88-amino-acid polypeptide reads, in one-letter code: N-alpha-acetyltransferase 38, NatC auxiliary subunit (88 aa).

One can recognise a Sm domain in the interval 1–72 (MDILKLSDFI…VKTIMIDKPV (72 aa)).

As to quaternary structure, component of the N-terminal acetyltransferase C (NatC) complex, composed of the catalytic subunit Naa30/MAK3, a large auxiliary subunit Naa35/MAK10 and a small auxiliary subunit Naa38/MAK31.

Component of the NatC N-terminal acetyltransferase, which associates with the ribosome to acetylate nascent protein chains in a cotranslational manner. NatC acetylates protein N-termini starting with methionine, followed by a hydrophobic or amphipathic amino acid, with amino acids at positions 3 and 4 also contributing to NatC recognition. The first 4 amino acids of cognate substrates are recognized at the Naa30/MAK3-Naa35/MAK10 interface. NatC-dependent acetylation targets various substrate proteins to specific subcellular sites, including isoform 2 of tRNA-specific methyltransferase Trm1 to the inner nuclear membrane. Catalyzes the acetylation of the N-terminal Met of ARF-like GTPase ARL3, which is required for its Golgi localization via interaction with the Golgi-localized integral membrane protein SYS1, which may serve as a receptor for acetylated ARL3. Catalyzes the acetylation of the N-terminal Met of L-A virus Gag protein. MAK31 is necessary for the structural stability of L-A double-stranded RNA-containing particles. Necessary for growth at 37 degrees Celsius as well as for maintenance of the killer plasmid. In Saccharomyces cerevisiae (strain ATCC 204508 / S288c) (Baker's yeast), this protein is N-alpha-acetyltransferase 38, NatC auxiliary subunit (MAK31).